The chain runs to 393 residues: NAD(P)H-quinone oxidoreductase subunit H, chloroplastic (393 aa).

It belongs to the complex I 49 kDa subunit family. As to quaternary structure, NDH is composed of at least 16 different subunits, 5 of which are encoded in the nucleus.

Its subcellular location is the plastid. It localises to the chloroplast thylakoid membrane. The enzyme catalyses a plastoquinone + NADH + (n+1) H(+)(in) = a plastoquinol + NAD(+) + n H(+)(out). The catalysed reaction is a plastoquinone + NADPH + (n+1) H(+)(in) = a plastoquinol + NADP(+) + n H(+)(out). In terms of biological role, NDH shuttles electrons from NAD(P)H:plastoquinone, via FMN and iron-sulfur (Fe-S) centers, to quinones in the photosynthetic chain and possibly in a chloroplast respiratory chain. The immediate electron acceptor for the enzyme in this species is believed to be plastoquinone. Couples the redox reaction to proton translocation, and thus conserves the redox energy in a proton gradient. The polypeptide is NAD(P)H-quinone oxidoreductase subunit H, chloroplastic (Guizotia abyssinica (Niger)).